A 243-amino-acid chain; its full sequence is UPF0758 protein PCC7424_2073 (243 aa).

The MPN domain maps to 112 to 235; it reads VEINDPVSAV…HQSLRTVTDL (124 aa). Zn(2+)-binding residues include His184, His186, and Asp197. A JAMM motif motif is present at residues 184-197; the sequence is HNHPSGNVAPSQED.

Belongs to the UPF0758 family.

This chain is UPF0758 protein PCC7424_2073, found in Gloeothece citriformis (strain PCC 7424) (Cyanothece sp. (strain PCC 7424)).